The chain runs to 117 residues: Large ribosomal subunit protein bL17 (117 aa).

Belongs to the bacterial ribosomal protein bL17 family. In terms of assembly, part of the 50S ribosomal subunit. Contacts protein L32.

The protein is Large ribosomal subunit protein bL17 of Thermomicrobium roseum (strain ATCC 27502 / DSM 5159 / P-2).